A 351-amino-acid polypeptide reads, in one-letter code: Protein-glutamate methylesterase/protein-glutamine glutaminase 2 (351 aa).

Residues 4-121 (KVLVVDDSTL…PQGFNEYQDL (118 aa)) form the Response regulatory domain. Residue aspartate 55 is modified to 4-aspartylphosphate. A CheB-type methylesterase domain is found at 156 to 348 (RTVNTQLVAI…DKLLQYLASV (193 aa)). Residues serine 168, histidine 194, and aspartate 290 contribute to the active site.

The protein belongs to the CheB family. In terms of processing, phosphorylated by CheA. Phosphorylation of the N-terminal regulatory domain activates the methylesterase activity.

Its subcellular location is the cytoplasm. It catalyses the reaction [protein]-L-glutamate 5-O-methyl ester + H2O = L-glutamyl-[protein] + methanol + H(+). The enzyme catalyses L-glutaminyl-[protein] + H2O = L-glutamyl-[protein] + NH4(+). Functionally, involved in chemotaxis. Part of a chemotaxis signal transduction system that modulates chemotaxis in response to various stimuli. Catalyzes the demethylation of specific methylglutamate residues introduced into the chemoreceptors (methyl-accepting chemotaxis proteins or MCP) by CheR. Also mediates the irreversible deamidation of specific glutamine residues to glutamic acid. The sequence is that of Protein-glutamate methylesterase/protein-glutamine glutaminase 2 from Shewanella oneidensis (strain ATCC 700550 / JCM 31522 / CIP 106686 / LMG 19005 / NCIMB 14063 / MR-1).